The chain runs to 249 residues: Protein TIFY 10B (249 aa).

Residues 113 to 148 enclose the Tify domain; the sequence is PESQSAPLTIFYGGRVMVFDDFSAEKAKEVIDLANK. A Jas motif is present at residues 204–229; that stretch reads PIARRASLHRFLEKRKDRITSKAPYQ. The Nuclear localization signal motif lies at 206 to 213; that stretch reads ARRASLHR. Residues 225-249 form a disordered region; that stretch reads KAPYQIDGSAEASSKPTNPAWLSSR. Over residues 235-249 the composition is skewed to polar residues; it reads EASSKPTNPAWLSSR.

This sequence belongs to the TIFY/JAZ family. In terms of assembly, homo- and heterodimer. Interacts with COI1, MYC2, MYC3, MYC4, AFPH2/NINJA, TIFY10A/JAZ1, TIFY6B/JAZ3, TIFY11A/JAZ5, TIFY11B/JAZ6, TIFY5A/JAZ8, TIFY7/JAZ9, TIFY9/JAZ10, TIFY3A/JAZ11 and TIFY3B/JAZ12. Interacts with RHD6 and RSL1. As to quaternary structure, (Microbial infection) Interacts with the pathogenic Pseudomonas syringae HopZ1a protein. Post-translationally, (Microbial infection) Acetylated by Pseudomonas syringae HopZ1a. In terms of processing, ubiquitinated. Targeted for degradation by the SCF(COI1) E3 ubiquitin ligase-proteasome pathway during jasmonate signaling. As to expression, expressed in cotyledons, hypocotyls, roots, sepals, petal vascular tissue and stigmas of developing flowers. Expressed in stamen filaments after jasmonic acid treatment.

The protein resides in the nucleus. Functionally, repressor of jasmonate responses. Jasmonoyl-isoleucine (JA-Ile) specifically promotes COI1-TIFY10B/JAZ2 interaction. Activated by MYC2, MYC3 and MYC4 transcription factors. Interacts with and suppresses RHD6 and RSL1 transcription factor activities to negatively regulate jasmonate-stimulated root hair development. The protein is Protein TIFY 10B of Arabidopsis thaliana (Mouse-ear cress).